Here is a 158-residue protein sequence, read N- to C-terminus: Transcription elongation factor GreA (158 aa).

The protein belongs to the GreA/GreB family.

Its function is as follows. Necessary for efficient RNA polymerase transcription elongation past template-encoded arresting sites. The arresting sites in DNA have the property of trapping a certain fraction of elongating RNA polymerases that pass through, resulting in locked ternary complexes. Cleavage of the nascent transcript by cleavage factors such as GreA or GreB allows the resumption of elongation from the new 3'terminus. GreA releases sequences of 2 to 3 nucleotides. This Methylobacterium nodulans (strain LMG 21967 / CNCM I-2342 / ORS 2060) protein is Transcription elongation factor GreA.